Consider the following 153-residue polypeptide: Xanthine-guanine phosphoribosyltransferase (153 aa).

Residues 37-38 (RG), Arg-69, and 88-96 (DDLVDTGGT) each bind 5-phospho-alpha-D-ribose 1-diphosphate. Arg-69 lines the GMP pocket. Position 89 (Asp-89) interacts with Mg(2+). Guanine contacts are provided by Asp-92 and Ile-135. The xanthine site is built by Asp-92 and Ile-135. Residues 92–96 (DTGGT) and 134–135 (WI) contribute to the GMP site.

It belongs to the purine/pyrimidine phosphoribosyltransferase family. XGPT subfamily. As to quaternary structure, homotetramer. Mg(2+) is required as a cofactor.

It localises to the cell inner membrane. The enzyme catalyses GMP + diphosphate = guanine + 5-phospho-alpha-D-ribose 1-diphosphate. The catalysed reaction is XMP + diphosphate = xanthine + 5-phospho-alpha-D-ribose 1-diphosphate. It catalyses the reaction IMP + diphosphate = hypoxanthine + 5-phospho-alpha-D-ribose 1-diphosphate. The protein operates within purine metabolism; GMP biosynthesis via salvage pathway; GMP from guanine: step 1/1. It participates in purine metabolism; XMP biosynthesis via salvage pathway; XMP from xanthine: step 1/1. In terms of biological role, purine salvage pathway enzyme that catalyzes the transfer of the ribosyl-5-phosphate group from 5-phospho-alpha-D-ribose 1-diphosphate (PRPP) to the N9 position of the 6-oxopurines guanine and xanthine to form the corresponding ribonucleotides GMP (guanosine 5'-monophosphate) and XMP (xanthosine 5'-monophosphate), with the release of PPi. To a lesser extent, also acts on hypoxanthine. This chain is Xanthine-guanine phosphoribosyltransferase, found in Photorhabdus laumondii subsp. laumondii (strain DSM 15139 / CIP 105565 / TT01) (Photorhabdus luminescens subsp. laumondii).